The following is a 408-amino-acid chain: Mitochondrial outer membrane protein SLC25A46 (408 aa).

Disordered regions lie at residues 1 to 23 and 52 to 80; these read MHPRRPEGFDGLGYRGGGREEPC and HWGEKTPPYGAGTPLGAAGLNEEPGLGAG. A compositionally biased stretch (low complexity) spans 66–76; sequence LGAAGLNEEPG. The Solcar 1 repeat unit spans residues 86–177; the sequence is QLNRFAGFGI…GIISEFTPLP (92 aa). 6 helical membrane passes run 93 to 113, 157 to 177, 189 to 209, 248 to 268, 304 to 324, and 373 to 393; these read FGIGLASLFTENVLAHPCIVL, FIVQGITLGTEGIISEFTPLP, IGGHLLLKGLTHVIAMPFYSA, LLPLMVLIFPTALHGVLHYVI, FPELIASFAASLCADVMLYPL, and LGFYKGFGAVVVQYTLHVAVL. The stretch at 301–403 is one Solcar 2 repeat; sequence DAYFPELIAS…QLTKIIYSTL (103 aa).

The protein belongs to the mitochondrial carrier (TC 2.A.29) family.

The protein resides in the mitochondrion outer membrane. Transmembrane protein of the mitochondrial outer membrane that controls mitochondrial organization. May regulate the assembly of the MICOS (mitochondrial contact site and cristae organizing system) complex which is essential to the biogenesis and dynamics of mitochondrial cristae, the inwards folds of the inner mitochondrial membrane. Through its interaction with the EMC (endoplasmic reticulum membrane protein complex), could regulate mitochondrial lipid homeostasis and thereby mitochondrial fission. This Gallus gallus (Chicken) protein is Mitochondrial outer membrane protein SLC25A46.